A 438-amino-acid chain; its full sequence is Cyclic 2,3-diphosphoglycerate synthetase (438 aa).

This sequence belongs to the cyclic 2,3-diphosphoglycerate synthetase family.

The protein resides in the cytoplasm. The catalysed reaction is (2R)-2,3-bisphosphoglycerate + ATP + H(+) = cyclic (2R)-2,3-bisphosphoglycerate + ADP + phosphate. Functionally, catalyzes the formation of cyclic 2,3-diphosphoglycerate (cDPG) by formation of an intramolecular phosphoanhydride bond at the expense of ATP. This Thermococcus gammatolerans (strain DSM 15229 / JCM 11827 / EJ3) protein is Cyclic 2,3-diphosphoglycerate synthetase.